The following is a 1088-amino-acid chain: Ran-binding protein 17 (1088 aa).

An N-acetylalanine modification is found at Ala2. Ser569 carries the post-translational modification Phosphoserine.

It belongs to the exportin family. Binds to nucleoporins and the GTP-bound form of Ran. Highly expressed in testis, moderately in pancreas and weakly in other tissues studied.

It is found in the cytoplasm. It localises to the nucleus. The protein resides in the nuclear pore complex. May function as a nuclear transport receptor. The protein is Ran-binding protein 17 (RANBP17) of Homo sapiens (Human).